The sequence spans 101 residues: Precursor of CEP6 (101 aa).

The N-terminal stretch at 1-26 is a signal peptide; that stretch reads MKLSVYIILSILFISTVFYEIQFTEA. The propeptide occupies 27–48; it reads RQLRKTDDQDHDDHHFTVGYTD. A compositionally biased stretch (basic and acidic residues) spans 29 to 42; sequence LRKTDDQDHDDHHF. The interval 29–101 is disordered; the sequence is LRKTDDQDHD…HAVKNNEPNA (73 aa). Residues Pro52, Pro55, and Pro59 each carry the hydroxyproline modification. The propeptide occupies 64–77; it reads KMKENEENAGGYKD. Residues 64–79 show a composition bias toward basic and acidic residues; it reads KMKENEENAGGYKDDF. Hydroxyproline is present on residues Pro81, Pro84, and Pro88. The propeptide occupies 93–101; that stretch reads AVKNNEPNA.

It belongs to the C-terminally encoded plant signaling peptide (CEP) family. Interacts with CEP receptors (e.g. CEPR1 and CEPR2). Post-translationally, the mature small signaling peptide is generated by proteolytic processing of the longer precursor. In terms of tissue distribution, expressed in lateral root primordia and in lateral roots excluding the meristem region. Also present in the aerial tissues, such as leaf petioles and the shoot apex region.

It is found in the secreted. It localises to the extracellular space. The protein localises to the apoplast. Extracellular signaling peptide that represses primary root growth rate. Modulates leaf morphology. Regulates systemic nitrogen (N)-demand signaling. Mediates up-regulation of genes involved in N uptake and assimilation pathways. This is Precursor of CEP6 from Arabidopsis thaliana (Mouse-ear cress).